Consider the following 165-residue polypeptide: Fibrinogen-binding protein (165 aa).

The N-terminal stretch at 1–29 (MKNKLIAKSLLAIAAIGITTTTIASTADA) is a signal peptide.

In terms of assembly, interacts with host fibrinogen alpha chain/FGA. Interacts with host complement protein C3.

It is found in the secreted. Functionally, extracellular fibrinogen-binding protein that plays an important role in virulence. By interacting with the alpha chain of fibrinogen and its derivative fibrin, enhances a non-functional interaction between fibrinogen and platelets and is responsible for repression of fibrinogen-dependent platelet aggregation. In addition, assembles a fibrinogen protective shield around the bacteria which results in impaired phagocytic clearance by the host. Mechanistically, interacts with host complement C3b deposited on the surface of the bacterium via its C-terminal and then recruits fibrinogen via its N-terminal. This Staphylococcus aureus (strain MRSA252) protein is Fibrinogen-binding protein (fib).